Reading from the N-terminus, the 607-residue chain is Terpenoid synthase 29 (607 aa).

Mg(2+)-binding residues include Asp358, Asp362, Asn502, Thr506, and Glu510. A DDXXD motif motif is present at residues 358–362 (DDTYD).

This sequence belongs to the terpene synthase family. Tpsa subfamily. Requires Mg(2+) as cofactor. Mn(2+) serves as cofactor. As to expression, predominantly expressed in flowers but also in siliques, roots, leaves and stems.

Its subcellular location is the cytoplasm. It participates in secondary metabolite biosynthesis; terpenoid biosynthesis. This Arabidopsis thaliana (Mouse-ear cress) protein is Terpenoid synthase 29 (TPS29).